The sequence spans 243 residues: UMP-CMP kinase 2 (243 aa).

69-74 (GSGKGT) is a binding site for ATP. The interval 89–118 (SAGDLLRSEISTGREKGELILNIIKEGKIV) is NMP. Residues Arg-95, 116 to 118 (KIV), and 143 to 146 (GFPR) contribute to the a ribonucleoside 5'-phosphate site. Asn-150 is a binding site for CMP. Positions 181 to 189 (GRNQGRVDD) are LID. Arg-182 is a binding site for ATP. Residues Arg-186 and Arg-197 each contribute to the a ribonucleoside 5'-phosphate site.

The protein belongs to the adenylate kinase family. UMP-CMP kinase subfamily. In terms of assembly, monomer. Mg(2+) is required as a cofactor.

It is found in the cytoplasm. It localises to the nucleus. It carries out the reaction UMP + ATP = UDP + ADP. The catalysed reaction is CMP + ATP = CDP + ADP. The enzyme catalyses dCMP + ATP = dCDP + ADP. In terms of biological role, catalyzes the phosphorylation of pyrimidine nucleoside monophosphates at the expense of ATP. Plays an important role in de novo pyrimidine nucleotide biosynthesis. Has preference for UMP and CMP as phosphate acceptors. The protein is UMP-CMP kinase 2 of Oryza sativa subsp. japonica (Rice).